A 530-amino-acid polypeptide reads, in one-letter code: uncharacterized protein (530 aa).

A disordered region spans residues 362–408 (NLTPKLNKTNEDIKSDSTSQPQGFPEGNRRVMENPETKVSKTDDEEM). The span at 388–403 (GNRRVMENPETKVSKT) shows a compositional bias: basic and acidic residues.

This sequence belongs to the IIV-6 030L family.

This is an uncharacterized protein from Invertebrate iridescent virus 6 (IIV-6).